Here is a 416-residue protein sequence, read N- to C-terminus: Iron-regulated transcriptional activator AFT2 (416 aa).

Residue D53 coordinates Zn(2+). 9 residues coordinate DNA: R54, H55, K58, I74, E75, R76, S77, D78, and K81. H55 contributes to the Zn(2+) binding site. Residue C86 coordinates Zn(2+). S88 is a binding site for DNA. C109 contributes to the Zn(2+) binding site. V119 and R120 together coordinate DNA. Zn(2+) is bound by residues H133 and H135. 2 residues coordinate DNA: Q157 and N159. The CDC [2Fe-2S] cluster binding motif motif lies at 187–189 (CDC).

In terms of assembly, homodimer. Dimerization decreases the DNA-binding activity.

The protein resides in the nucleus. With respect to regulation, dimerization via the binding of Fe(2+) or a [2Fe-2S] cluster decreases the DNA-binding activity. Its function is as follows. Transcription factor required for iron homeostasis and resistance to oxidative stress. With AFT1, activates the gene expression in response to low-iron conditions, also called iron regulon. Recognizes the consensus iron-responsive element (Fe-RE) sequence 5'-CACCC-3' in the promoters of target genes. The transcription activation by AFT1 and AFT2 depends on the mitochondrial iron-sulfur protein biosynthesis pathway. In high iron condition, the presence of iron leads to dimerization, which in turn leads to a decrease in DNA affinity. The polypeptide is Iron-regulated transcriptional activator AFT2 (Saccharomyces cerevisiae (strain ATCC 204508 / S288c) (Baker's yeast)).